The sequence spans 443 residues: KH domain-containing, RNA-binding, signal transduction-associated protein 1 (443 aa).

A disordered region spans residues 1 to 95 (MQRRDDPAAR…LLPPSATAAA (95 aa)). A phosphoserine mark is found at S18 and S20. The residue at position 21 (K21) is an N6-acetyllysine. A Phosphoserine modification is found at S29. T33 carries the phosphothreonine modification. R45 and R52 each carry asymmetric dimethylarginine; by PRMT1. A Phosphoserine modification is found at S58. Over residues 61-72 (TQPPPLLPPSNP) the composition is skewed to pro residues. The span at 81–95 (SAPTPLLPPSATAAA) shows a compositional bias: low complexity. T84 carries the post-translational modification Phosphothreonine; by MAPK1. Glycyl lysine isopeptide (Lys-Gly) (interchain with G-Cter in SUMO2) cross-links involve residues K96 and K102. Positions 100–260 (ENKYLPELMA…VKKFLVPDMM (161 aa)) are involved in homodimerization. Position 113 is a phosphoserine (S113). Residue K139 forms a Glycyl lysine isopeptide (Lys-Gly) (interchain with G-Cter in SUMO2) linkage. At S150 the chain carries Phosphoserine. The KH domain occupies 171-197 (NFVGKILGPQGNTIKRLQEETGAKISV). At K175 the chain carries N6-acetyllysine; alternate. K175 participates in a covalent cross-link: Glycyl lysine isopeptide (Lys-Gly) (interchain with G-Cter in SUMO2); alternate. Phosphothreonine is present on T183. Positions 280-317 (PSRGRGVSVRGRGAAPPPPPVPRGRGVGPPRGALVRGT) are disordered. Omega-N-methylarginine is present on residues R282, R284, and R291. Residues 283–293 (GRGVSVRGRGA) are compositionally biased toward low complexity. R304 carries the post-translational modification Asymmetric dimethylarginine; by PRMT1. A compositionally biased stretch (low complexity) spans 307 to 316 (GPPRGALVRG). 2 positions are modified to omega-N-methylarginine; by PRMT1: R310 and R315. Residue R320 is modified to Dimethylated arginine; alternate. R320 carries the omega-N-methylarginine; by PRMT1; alternate modification. R325 carries the omega-N-methylarginine; by PRMT1 modification. A disordered region spans residues 326-345 (GATVTRGVPPPPTVRGAPTP). R331 and R340 each carry dimethylated arginine; alternate. 2 positions are modified to omega-N-methylarginine; by PRMT1; alternate: R331 and R340. R331 bears the Asymmetric dimethylarginine; alternate mark. Residues 351–443 (GIQRIPLPPT…AYREHPYGRY (93 aa)) are interaction with HNRNPA1. Phosphotyrosine is present on Y387. The residue at position 390 (S390) is a Phosphoserine. Positions 400-420 (GHGELQDSYEAYGQDDWNGTR) are interaction with ZBTB7A. Positions 411-443 (YGQDDWNGTRPSLKAPPARPVKGAYREHPYGRY) are disordered. K432 participates in a covalent cross-link: Glycyl lysine isopeptide (Lys-Gly) (interchain with G-Cter in SUMO2). The span at 434 to 443 (AYREHPYGRY) shows a compositional bias: basic and acidic residues. Phosphotyrosine; by PTK6 occurs at positions 435, 440, and 443.

Belongs to the KHDRBS family. Self-associates to form homooligomers when bound to RNA, oligomerization appears to be limited when binding to proteins. Interacts with KHDRBS3/SLIM-2. Forms a trimeric complex in the nucleus consisting of BANP, HDAC6 and KHDRBS1/SAM68; HDAC6 keeps KHDRBS1 in a deacetylated state which inhibits the inclusion of CD44 alternate exons. The complex is disrupted by MAPK1/MAPK3-mediated phosphorylation of BANP which results in BANP export to the cytoplasm. This facilitates acetylation of KHDRBS1 and CD44 variant exon inclusion. Interacts with KHDRBS2/SLIM-1; heterooligomer formation of KHDRBS family proteins may modulate RNA substrate specificity. Interacts with PIK3R1, PLCG1. Interacts with RASA1, GRB2, SRC, CBP, PRMT1, APC, HNRNPA1. Interacts with PTK6 (via SH3 and SH2 domains). Forms a complex with ILF2, ILF3, YLPM1, RBMX, NCOA5 and PPP1CA. Binds WBP4/FBP21 (via WW domains), FNBP4/FBP30 (via WW domains). Interacts (via Arg/Gly-rich-flanked Pro-rich regions) with FYN (via the SH3 domain). Interacts with the non-receptor tyrosine kinase SRMS; the interaction leads to phosphorylation of KHDRBS1. Interacts with ZBTB7A; negatively regulates KHDRBS1 splicing activity toward BCL2L1. In terms of processing, tyrosine phosphorylated by several non-receptor tyrosine kinases including LCK, FYN and JAK3. Also tyrosine phosphorylated by the non-receptor tyrosine kinase SRMS in an EGF-dependent manner. Phosphorylation by PTK6 negatively regulates its RNA binding ability. Phosphorylation by PTK6 at Tyr-440 dictates the nuclear localization of KHDRBS1. Post-translationally, acetylated. Positively correlates with ability to bind RNA. Deacetylated by HDAC6; this regulates alternative splicing by inhibiting the inclusion of CD44 alternate exons. Arginine methylation is required for nuclear localization, Inhibits interaction with Src-like SH3 domains, but not interaction with WW domains of WBP4/FBP21 and FNBP4/FBP30.

Its subcellular location is the nucleus. The protein resides in the cytoplasm. The protein localises to the membrane. In terms of biological role, recruited and tyrosine phosphorylated by several receptor systems, for example the T-cell, leptin and insulin receptors. Once phosphorylated, functions as an adapter protein in signal transduction cascades by binding to SH2 and SH3 domain-containing proteins. Role in G2-M progression in the cell cycle. Represses CBP-dependent transcriptional activation apparently by competing with other nuclear factors for binding to CBP. Also acts as a putative regulator of mRNA stability and/or translation rates and mediates mRNA nuclear export. Positively regulates the association of constitutive transport element (CTE)-containing mRNA with large polyribosomes and translation initiation. May not be involved in the nucleocytoplasmic export of unspliced (CTE)-containing RNA species. RNA-binding protein that plays a role in the regulation of alternative splicing and influences mRNA splice site selection and exon inclusion. Binds to RNA containing 5'-[AU]UAA-3' as a bipartite motif spaced by more than 15 nucleotides. Binds poly(A). Can regulate CD44 alternative splicing in a Ras pathway-dependent manner. In cooperation with HNRNPA1 modulates alternative splicing of BCL2L1 by promoting splicing toward isoform Bcl-X(S), and of SMN1. Can regulate alternative splicing of NRXN1 and NRXN3 in the laminin G-like domain 6 containing the evolutionary conserved neurexin alternative spliced segment 4 (AS4) involved in neurexin selective targeting to postsynaptic partners. In a neuronal activity-dependent manner cooperates synergistically with KHDRBS2/SLIM-1 in regulation of NRXN1 exon skipping at AS4. The cooperation with KHDRBS2/SLIM-1 is antagonistic for regulation of NXRN3 alternative splicing at AS4. In Rattus norvegicus (Rat), this protein is KH domain-containing, RNA-binding, signal transduction-associated protein 1.